The chain runs to 457 residues: uncharacterized protein (457 aa).

A run of 14 helical transmembrane segments spans residues 15 to 35, 54 to 74, 87 to 107, 112 to 132, 144 to 164, 166 to 186, 205 to 225, 229 to 249, 269 to 289, 308 to 328, 334 to 354, 357 to 377, 400 to 420, and 428 to 448; these read YGAI…GAIA, IWVV…FSFL, GLVV…LQML, VIQG…IRLI, INSF…AAIL, IASW…ALLL, LPSA…LSGF, QSLT…IFFI, LFSL…LAMV, LLLT…GYLI, GLLG…LVLL, SPAD…FGLF, MLGT…ALML, and THVS…VSGL.

The protein belongs to the major facilitator superfamily. TCR/Tet family.

The protein localises to the cell inner membrane. This is an uncharacterized protein from Escherichia coli (strain K12).